The following is a 459-amino-acid chain: Probable PTS system sucrose-specific EIIBC component (459 aa).

The PTS EIIB type-1 domain maps to 1 to 86; that stretch reads MHKEIAKELL…VHVWETAPSE (86 aa). C25 serves as the catalytic Phosphocysteine intermediate; for EIIB activity. In terms of domain architecture, PTS EIIC type-1 spans 106–459; it reads KTLSDIFVPI…LFLGFKEETE (354 aa). Transmembrane regions (helical) follow at residues 111-131, 147-167, 177-197, 209-229, 245-265, 288-308, 329-349, 360-380, 388-408, 412-432, and 434-454; these read IFVP…LIGM, MLDL…GFSA, LGAV…SMLG, LHIP…SVFV, LDVV…ALIV, AGIA…LSGL, FLVP…LAVF, IALP…VFGV, FIGA…VQVV, YGLT…ANFV, and YMIG…FLGF.

The protein localises to the cell membrane. Its function is as follows. The phosphoenolpyruvate-dependent sugar phosphotransferase system (sugar PTS), a major carbohydrate active -transport system, catalyzes the phosphorylation of incoming sugar substrates concomitantly with their translocation across the cell membrane. This system may be involved in sucrose transport. The EIIB domain is mainly phosphorylated by the EIIA domains of GamP and PtsA/YpqE. Functionally, negatively regulates SacY activity by catalyzing its phosphorylation on 'His-99'. The polypeptide is Probable PTS system sucrose-specific EIIBC component (sacX) (Bacillus subtilis (strain 168)).